We begin with the raw amino-acid sequence, 182 residues long: Dirigent protein 1 (182 aa).

An N-terminal signal peptide occupies residues 1 to 24 (MAKRFLLLLPLLSSILLLAVSVTA). N-linked (GlcNAc...) asparagine glycosylation is present at N125.

It belongs to the plant dirigent protein family. As to quaternary structure, homodimer.

It is found in the secreted. The protein localises to the extracellular space. It localises to the apoplast. Functionally, dirigent proteins impart stereoselectivity on the phenoxy radical-coupling reaction, yielding optically active lignans from two molecules of coniferyl alcohol in the biosynthesis of lignans, flavonolignans, and alkaloids and thus plays a central role in plant secondary metabolism. This Arabidopsis thaliana (Mouse-ear cress) protein is Dirigent protein 1 (DIR1).